Here is a 206-residue protein sequence, read N- to C-terminus: Imidazoleglycerol-phosphate dehydratase (206 aa).

The segment at 1–21 (MTTPSTAPTPAPRKAEVSRNT) is disordered.

The protein belongs to the imidazoleglycerol-phosphate dehydratase family.

Its subcellular location is the cytoplasm. It carries out the reaction D-erythro-1-(imidazol-4-yl)glycerol 3-phosphate = 3-(imidazol-4-yl)-2-oxopropyl phosphate + H2O. Its pathway is amino-acid biosynthesis; L-histidine biosynthesis; L-histidine from 5-phospho-alpha-D-ribose 1-diphosphate: step 6/9. This is Imidazoleglycerol-phosphate dehydratase from Polaromonas sp. (strain JS666 / ATCC BAA-500).